A 365-amino-acid chain; its full sequence is 3-isopropylmalate dehydrogenase (365 aa).

Residue 80 to 91 participates in NAD(+) binding; sequence GPKWGTGAVRPE. Arginine 98, arginine 108, arginine 137, and aspartate 226 together coordinate substrate. Residues aspartate 226, aspartate 251, and aspartate 255 each contribute to the Mg(2+) site. 290–301 is an NAD(+) binding site; that stretch reads GSAPDLPKGKVN.

Belongs to the isocitrate and isopropylmalate dehydrogenases family. Homodimer. Mg(2+) serves as cofactor. The cofactor is Mn(2+).

It localises to the cytoplasm. The catalysed reaction is (2R,3S)-3-isopropylmalate + NAD(+) = 4-methyl-2-oxopentanoate + CO2 + NADH. The protein operates within amino-acid biosynthesis; L-leucine biosynthesis; L-leucine from 3-methyl-2-oxobutanoate: step 3/4. In terms of biological role, catalyzes the oxidation of 3-carboxy-2-hydroxy-4-methylpentanoate (3-isopropylmalate) to 3-carboxy-4-methyl-2-oxopentanoate. The product decarboxylates to 4-methyl-2 oxopentanoate. The chain is 3-isopropylmalate dehydrogenase (LEU2) from Candida glabrata (strain ATCC 2001 / BCRC 20586 / JCM 3761 / NBRC 0622 / NRRL Y-65 / CBS 138) (Yeast).